Here is a 71-residue protein sequence, read N- to C-terminus: Exodeoxyribonuclease 7 small subunit (71 aa).

The protein belongs to the XseB family. Heterooligomer composed of large and small subunits.

The protein resides in the cytoplasm. The catalysed reaction is Exonucleolytic cleavage in either 5'- to 3'- or 3'- to 5'-direction to yield nucleoside 5'-phosphates.. Bidirectionally degrades single-stranded DNA into large acid-insoluble oligonucleotides, which are then degraded further into small acid-soluble oligonucleotides. This is Exodeoxyribonuclease 7 small subunit from Clostridium botulinum (strain 657 / Type Ba4).